Consider the following 469-residue polypeptide: Tetratricopeptide repeat protein 38 (469 aa).

TPR repeat units follow at residues 107 to 140 (REML…HPTD), 179 to 212 (SYVK…DQTD), and 251 to 284 (CHVY…QCFA).

Belongs to the TTC38 family.

The chain is Tetratricopeptide repeat protein 38 (ttc38) from Xenopus tropicalis (Western clawed frog).